The chain runs to 361 residues: 1-deoxy-D-xylulose 5-phosphate reductoisomerase (361 aa).

NADPH contacts are provided by Thr12, Gly13, Ser14, Ile15, Gly38, and Asn102. Lys103 serves as a coordination point for 1-deoxy-D-xylulose 5-phosphate. Glu104 is a binding site for NADPH. Asp126 contributes to the Mn(2+) binding site. The 1-deoxy-D-xylulose 5-phosphate site is built by Ser127, Glu128, Ser152, and His175. Glu128 provides a ligand contact to Mn(2+). Gly181 contributes to the NADPH binding site. 4 residues coordinate 1-deoxy-D-xylulose 5-phosphate: Ser188, Asn193, Lys194, and Glu197. Residue Glu197 coordinates Mn(2+).

This sequence belongs to the DXR family. Mg(2+) is required as a cofactor. Requires Mn(2+) as cofactor.

It catalyses the reaction 2-C-methyl-D-erythritol 4-phosphate + NADP(+) = 1-deoxy-D-xylulose 5-phosphate + NADPH + H(+). Its pathway is isoprenoid biosynthesis; isopentenyl diphosphate biosynthesis via DXP pathway; isopentenyl diphosphate from 1-deoxy-D-xylulose 5-phosphate: step 1/6. Its function is as follows. Catalyzes the NADPH-dependent rearrangement and reduction of 1-deoxy-D-xylulose-5-phosphate (DXP) to 2-C-methyl-D-erythritol 4-phosphate (MEP). This chain is 1-deoxy-D-xylulose 5-phosphate reductoisomerase, found in Leifsonia xyli subsp. xyli (strain CTCB07).